We begin with the raw amino-acid sequence, 298 residues long: MKTLQSTLLLLLFVPLIKPAPPTQQDSRIIYDYGTDNFEESIFSQDYEDKYLDGKNIKEKETVIIPNEKSLQLQKDEAITPLPPKKENDEMPTCLLCVCLSGSVYCEEVDIDAVPPLPKESAYLYARFNKIKKLTAKDFADIPNLRRLDFTGNLIEDIEDGTFSKLSLLEELSLAENQLLKLPVLPPKLTLFNAKYNKIKSRGIKANAFKKLNNLTFLYLDHNALESVPLNLPESLRVIHLQFNNIASITDDTFCKANDTSYIRDRIEEIRLEGNPIVLGKHPNSFICLKRLPIGSYF.

A signal peptide spans 1-20 (MKTLQSTLLLLLFVPLIKPA). The N-linked (GlcNAc...) (keratan sulfate) asparagine glycan is linked to asparagine 88. LRR repeat units follow at residues 112 to 131 (DAVP…FNKI), 132 to 155 (KKLT…GNLI), 156 to 179 (EDIE…ENQL), 180 to 199 (LKLP…YNKI), 200 to 225 (KSRG…HNAL), 226 to 246 (ESVP…FNNI), and 247 to 277 (ASIT…GNPI). An N-linked (GlcNAc...) (keratan sulfate) asparagine glycan is attached at asparagine 214. Cysteine 255 and cysteine 288 are disulfide-bonded. N-linked (GlcNAc...) (keratan sulfate) asparagine glycosylation is present at asparagine 258.

Belongs to the small leucine-rich proteoglycan (SLRP) family. SLRP class III subfamily. Post-translationally, contains keratan sulfate.

The protein resides in the secreted. It localises to the extracellular space. The protein localises to the extracellular matrix. Its function is as follows. Induces bone formation in conjunction with TGF-beta-1 or TGF-beta-2. The sequence is that of Mimecan (OGN) from Pongo abelii (Sumatran orangutan).